Reading from the N-terminus, the 468-residue chain is 6-phosphogluconate dehydrogenase, NAD(+)-dependent, decarboxylating (468 aa).

NAD(+)-binding positions include Gly9–Gly14, Asn32–Thr34, Val73–Ala75, and Asn101. Substrate is bound by residues Asn101 and Ser127–Gly129. Catalysis depends on Lys181, which acts as the Proton acceptor. His184–Asn185 lines the substrate pocket. Glu188 functions as the Proton donor in the catalytic mechanism. The substrate site is built by Tyr189, Lys259, Arg286, Arg445, and His451.

Belongs to the 6-phosphogluconate dehydrogenase family. In terms of assembly, homodimer.

The enzyme catalyses 6-phospho-D-gluconate + NAD(+) = D-ribulose 5-phosphate + CO2 + NADH. Its function is as follows. Catalyzes the oxidative decarboxylation of 6-phosphogluconate to ribulose 5-phosphate and CO(2), with concomitant reduction of NAD to NADH. Does not contribute to oxidative pentose phosphate (PP) pathway fluxes during growth on glucose. The functional role of GntZ remains obscure. In Bacillus subtilis (strain 168), this protein is 6-phosphogluconate dehydrogenase, NAD(+)-dependent, decarboxylating (gntZ).